We begin with the raw amino-acid sequence, 217 residues long: ATP phosphoribosyltransferase (217 aa).

This sequence belongs to the ATP phosphoribosyltransferase family. Short subfamily. In terms of assembly, heteromultimer composed of HisG and HisZ subunits.

It is found in the cytoplasm. The enzyme catalyses 1-(5-phospho-beta-D-ribosyl)-ATP + diphosphate = 5-phospho-alpha-D-ribose 1-diphosphate + ATP. It participates in amino-acid biosynthesis; L-histidine biosynthesis; L-histidine from 5-phospho-alpha-D-ribose 1-diphosphate: step 1/9. In terms of biological role, catalyzes the condensation of ATP and 5-phosphoribose 1-diphosphate to form N'-(5'-phosphoribosyl)-ATP (PR-ATP). Has a crucial role in the pathway because the rate of histidine biosynthesis seems to be controlled primarily by regulation of HisG enzymatic activity. In Burkholderia vietnamiensis (strain G4 / LMG 22486) (Burkholderia cepacia (strain R1808)), this protein is ATP phosphoribosyltransferase.